Here is a 249-residue protein sequence, read N- to C-terminus: DNA repair protein RecO (249 aa).

The protein belongs to the RecO family.

Functionally, involved in DNA repair and RecF pathway recombination. This is DNA repair protein RecO from Afipia carboxidovorans (strain ATCC 49405 / DSM 1227 / KCTC 32145 / OM5) (Oligotropha carboxidovorans).